The chain runs to 342 residues: Holliday junction branch migration complex subunit RuvB (342 aa).

The interval 1-185 (MREDYLKSDD…FGINARLEYY (185 aa)) is large ATPase domain (RuvB-L). ATP contacts are provided by residues Leu24, Arg25, Gly66, Lys69, Thr70, Thr71, 132-134 (EDY), Arg175, Tyr185, and Arg222. Position 70 (Thr70) interacts with Mg(2+). Residues 186-256 (DAKLLTRIVQ…IARIALQALN (71 aa)) are small ATPAse domain (RuvB-S). The tract at residues 259–342 (HNGLDDMDNR…PPAQSGTLFE (84 aa)) is head domain (RuvB-H). 2 residues coordinate DNA: Arg314 and Arg319.

It belongs to the RuvB family. Homohexamer. Forms an RuvA(8)-RuvB(12)-Holliday junction (HJ) complex. HJ DNA is sandwiched between 2 RuvA tetramers; dsDNA enters through RuvA and exits via RuvB. An RuvB hexamer assembles on each DNA strand where it exits the tetramer. Each RuvB hexamer is contacted by two RuvA subunits (via domain III) on 2 adjacent RuvB subunits; this complex drives branch migration. In the full resolvosome a probable DNA-RuvA(4)-RuvB(12)-RuvC(2) complex forms which resolves the HJ.

The protein resides in the cytoplasm. The enzyme catalyses ATP + H2O = ADP + phosphate + H(+). In terms of biological role, the RuvA-RuvB-RuvC complex processes Holliday junction (HJ) DNA during genetic recombination and DNA repair, while the RuvA-RuvB complex plays an important role in the rescue of blocked DNA replication forks via replication fork reversal (RFR). RuvA specifically binds to HJ cruciform DNA, conferring on it an open structure. The RuvB hexamer acts as an ATP-dependent pump, pulling dsDNA into and through the RuvAB complex. RuvB forms 2 homohexamers on either side of HJ DNA bound by 1 or 2 RuvA tetramers; 4 subunits per hexamer contact DNA at a time. Coordinated motions by a converter formed by DNA-disengaged RuvB subunits stimulates ATP hydrolysis and nucleotide exchange. Immobilization of the converter enables RuvB to convert the ATP-contained energy into a lever motion, pulling 2 nucleotides of DNA out of the RuvA tetramer per ATP hydrolyzed, thus driving DNA branch migration. The RuvB motors rotate together with the DNA substrate, which together with the progressing nucleotide cycle form the mechanistic basis for DNA recombination by continuous HJ branch migration. Branch migration allows RuvC to scan DNA until it finds its consensus sequence, where it cleaves and resolves cruciform DNA. This is Holliday junction branch migration complex subunit RuvB from Cytophaga hutchinsonii (strain ATCC 33406 / DSM 1761 / CIP 103989 / NBRC 15051 / NCIMB 9469 / D465).